A 461-amino-acid polypeptide reads, in one-letter code: Steroidogenic factor 1 (461 aa).

Positions 10–85 (DELCPVCGDK…VGMRLEAVRA (76 aa)) form a DNA-binding region, nuclear receptor. The NR C4-type zinc-finger motif lies at 13 to 33 (CPVCGDKVSGYHYGLLTCESC). N6-acetyllysine occurs at positions 34, 38, and 72. The NR C4-type zinc finger occupies 49-73 (CTESQSCKIDKTQRKRCPFCRFQKC). Positions 116–158 (NGFKLETGPPVGVPPPPPPPPDYMLPHGLHASEPKGLASGPPA) are disordered. Residue Lys-119 forms a Glycyl lysine isopeptide (Lys-Gly) (interchain with G-Cter in SUMO) linkage. Residues 126 to 138 (VGVPPPPPPPPDY) are compositionally biased toward pro residues. A Glycyl lysine isopeptide (Lys-Gly) (interchain with G-Cter in SUMO) cross-link involves residue Lys-194. Residue Ser-203 is modified to Phosphoserine; by CDK7. An NR LBD domain is found at 222-459 (GVPELILQLL…NLLIEMLQAK (238 aa)). Residues 230 to 461 (LLQLEPDEDQ…LIEMLQAKQT (232 aa)) are important for dimerization. Residues Gly-341, Tyr-436, and Lys-440 each contribute to the a 1,2-diacyl-sn-glycero-3-phosphocholine site.

This sequence belongs to the nuclear hormone receptor family. NR5 subfamily. Binds DNA as a monomer. Part of a complex consisting of SFPQ, NONO and NR5A1. Interacts with NR0B2. Interacts with DGKQ and CDK7. Binds to and activated by HIPK3. May be regulated by phosphorylation and dephosphorylation. In terms of processing, acetylation stimulates the transcriptional activity. Post-translationally, sumoylation reduces CDK7-mediated phosphorylation on Ser-203. Phosphorylated on Ser-203 by CDK7. This phosphorylation promotes transcriptional activity. In terms of tissue distribution, adrenal, ovary, testis, placenta, adipocyte, and brain.

The protein localises to the nucleus. Functionally, transcriptional activator. Seems to be essential for sexual differentiation and formation of the primary steroidogenic tissues. Binds to the Ad4 site found in the promoter region of steroidogenic P450 genes such as CYP11A, CYP11B and CYP21B. Also regulates the AMH/Muellerian inhibiting substance gene as well as the AHCH and STAR genes. 5'-YCAAGGYC-3' and 5'-RRAGGTCA-3' are the consensus sequences for the recognition by NR5A1. The SFPQ-NONO-NR5A1 complex binds to the CYP17 promoter and regulates basal and cAMP-dependent transcriptional activity. Binds phospholipids with a phosphatidylinositol (PI) headgroup, in particular PI(3,4)P2 and PI(3,4,5)P3. Activated by the phosphorylation of NR5A1 by HIPK3 leading to increased steroidogenic gene expression upon cAMP signaling pathway stimulation. This is Steroidogenic factor 1 (NR5A1) from Bos taurus (Bovine).